The sequence spans 83 residues: Cytochrome b559 subunit alpha (83 aa).

Residues 21–35 (VIHSITIPSLFIAGW) form a helical membrane-spanning segment. Residue histidine 23 coordinates heme.

This sequence belongs to the PsbE/PsbF family. In terms of assembly, heterodimer of an alpha subunit and a beta subunit. PSII is composed of 1 copy each of membrane proteins PsbA, PsbB, PsbC, PsbD, PsbE, PsbF, PsbH, PsbI, PsbJ, PsbK, PsbL, PsbM, PsbT, PsbX, PsbY, PsbZ, Psb30/Ycf12, at least 3 peripheral proteins of the oxygen-evolving complex and a large number of cofactors. It forms dimeric complexes. Heme b serves as cofactor.

The protein localises to the plastid. It localises to the chloroplast thylakoid membrane. This b-type cytochrome is tightly associated with the reaction center of photosystem II (PSII). PSII is a light-driven water:plastoquinone oxidoreductase that uses light energy to abstract electrons from H(2)O, generating O(2) and a proton gradient subsequently used for ATP formation. It consists of a core antenna complex that captures photons, and an electron transfer chain that converts photonic excitation into a charge separation. The chain is Cytochrome b559 subunit alpha from Pinus koraiensis (Korean pine).